Reading from the N-terminus, the 165-residue chain is uncharacterized protein (165 aa).

The tract at residues 53–123 is disordered; sequence CSEKTGSAPN…PAPSSGRQGG (71 aa). Residues 58-71 show a composition bias toward low complexity; it reads GSAPNPGSSAPAPA.

This is an uncharacterized protein from Treponema pallidum (strain Nichols).